The primary structure comprises 190 residues: Elongation factor P-like protein (190 aa).

The protein belongs to the elongation factor P family.

The sequence is that of Elongation factor P-like protein from Proteus mirabilis (strain HI4320).